The chain runs to 210 residues: Mitochondrial cardiolipin hydrolase (210 aa).

Residues 1–6 (MLLWGR) lie on the Mitochondrial intermembrane side of the membrane. A helical transmembrane segment spans residues 7–24 (WKVVAGLAGLALSLELLL). At 25 to 210 (RYMRRRKPIR…YDFFPEKENK (186 aa)) the chain is on the cytoplasmic side. The 28-residue stretch at 138 to 165 (SSGYMHHKFAVVDGTVVLTGSLNWTVQA) folds into the PLD phosphodiesterase domain. Active-site residues include histidine 143, lysine 145, and aspartate 150.

Belongs to the phospholipase D family. MitoPLD/Zucchini subfamily. In terms of assembly, homodimer.

It is found in the mitochondrion outer membrane. The catalysed reaction is a cardiolipin + H2O = a 1,2-diacyl-sn-glycero-3-phospho-(1'-sn-glycerol) + a 1,2-diacyl-sn-glycero-3-phosphate + H(+). Functionally, presents phospholipase and nuclease activities, depending on the different physiological conditions. Plays a key role in mitochondrial fusion and fission via its phospholipase activity. In its phospholipase role, it uses the mitochondrial lipid cardiolipin as substrate to generate phosphatidate (PA or 1,2-diacyl-sn-glycero-3-phosphate), a second messenger signaling lipid. Production of PA facilitates Mitofusin-mediated fusion, whereas the cleavage of PA by the Lipin family of phosphatases produces diacylgycerol (DAG) which promotes mitochondrial fission. Regulates mitochondrial shape through facilitating mitochondrial fusion. During spermatogenesis, plays a critical role in PIWI-interacting RNA (piRNA) biogenesis. piRNAs provide essential protection against the activity of mobile genetic elements. piRNA-mediated transposon silencing is thus critical for maintaining genome stability, in particular in germline cells when transposons are mobilized as a consequence of wide-spread genomic demethylation. Has been shown to be a backbone-non-specific, single strand-specific nuclease, cleaving either RNA or DNA substrates with similar affinity. Produces 5' phosphate and 3' hydroxyl termini, suggesting it could directly participate in the processing of primary piRNA transcripts. Has been proposed to act as a cardiolipin hydrolase to generate phosphatidic acid at mitochondrial surface. Although it cannot be excluded that it can act as a phospholipase in some circumstances, this activity could not be confirmed. This chain is Mitochondrial cardiolipin hydrolase (pld6), found in Xenopus tropicalis (Western clawed frog).